The following is a 424-amino-acid chain: Histidine--tRNA ligase (424 aa).

The segment at 1 to 22 (MSYRRPKGTYDVYPGDAARQEP) is disordered.

This sequence belongs to the class-II aminoacyl-tRNA synthetase family. Homodimer.

The protein resides in the cytoplasm. The catalysed reaction is tRNA(His) + L-histidine + ATP = L-histidyl-tRNA(His) + AMP + diphosphate + H(+). In Rubrobacter xylanophilus (strain DSM 9941 / JCM 11954 / NBRC 16129 / PRD-1), this protein is Histidine--tRNA ligase.